Consider the following 301-residue polypeptide: Nucleotide-binding protein Noca_2527 (301 aa).

26 to 33 (GMTGAGRS) provides a ligand contact to ATP. GTP is bound at residue 77–80 (DVRS).

Belongs to the RapZ-like family.

In terms of biological role, displays ATPase and GTPase activities. This chain is Nucleotide-binding protein Noca_2527, found in Nocardioides sp. (strain ATCC BAA-499 / JS614).